Reading from the N-terminus, the 529-residue chain is Probable alpha-galactosidase A (529 aa).

Positions 1–19 (MKALFAAITMAHALLQTQA) are cleaved as a signal peptide. C42 and C74 form a disulfide bridge. Residues N45, N83, N89, and N119 are each glycosylated (N-linked (GlcNAc...) asparagine). Residues C122 and C152 are joined by a disulfide bond. D150 (nucleophile) is an active-site residue. N199 carries N-linked (GlcNAc...) asparagine glycosylation. D208 acts as the Proton donor in catalysis. N-linked (GlcNAc...) asparagine glycosylation is present at N351. Residues 408–528 (RVDAVSTGIV…GLPSGVRVSG (121 aa)) enclose the Ricin B-type lectin domain. Cystine bridges form between C425-C438 and C462-C475.

The protein belongs to the glycosyl hydrolase 27 family.

The protein resides in the secreted. It catalyses the reaction Hydrolysis of terminal, non-reducing alpha-D-galactose residues in alpha-D-galactosides, including galactose oligosaccharides, galactomannans and galactolipids.. Functionally, hydrolyzes a variety of simple alpha-D-galactoside as well as more complex molecules such as oligosaccharides and polysaccharides. In Aspergillus terreus (strain NIH 2624 / FGSC A1156), this protein is Probable alpha-galactosidase A (aglA).